A 359-amino-acid chain; its full sequence is Pyruvate dehydrogenase E1 component subunit beta, mitochondrial (359 aa).

Residues 1 to 30 (MAAVSGLVRRPLREVSRLLKRRFHWTAPAA) constitute a mitochondrion transit peptide. Y67 is subject to Phosphotyrosine. Position 89 (E89) interacts with thiamine diphosphate. Positions 142, 190, 191, 193, and 195 each coordinate K(+). K354 carries the N6-acetyllysine modification.

As to quaternary structure, heterotetramer of two PDHA1 and two PDHB subunits. The heterotetramer interacts with DLAT, and is part of the multimeric pyruvate dehydrogenase complex that contains multiple copies of pyruvate dehydrogenase (E1), dihydrolipoamide acetyltransferase (DLAT, E2) and lipoamide dehydrogenase (DLD, E3). These subunits are bound to an inner core composed of about 48 DLAT and 12 PDHX molecules. Interacts with DLAT. Thiamine diphosphate is required as a cofactor.

It is found in the mitochondrion matrix. The catalysed reaction is N(6)-[(R)-lipoyl]-L-lysyl-[protein] + pyruvate + H(+) = N(6)-[(R)-S(8)-acetyldihydrolipoyl]-L-lysyl-[protein] + CO2. Functionally, the pyruvate dehydrogenase complex catalyzes the overall conversion of pyruvate to acetyl-CoA and CO(2), and thereby links the glycolytic pathway to the tricarboxylic cycle. The chain is Pyruvate dehydrogenase E1 component subunit beta, mitochondrial (PDHB) from Pongo abelii (Sumatran orangutan).